Here is a 230-residue protein sequence, read N- to C-terminus: Ubiquitin carboxyl-terminal hydrolase isozyme L3 (230 aa).

Residues 5–229 (RWLPLEANPE…LRFNAIALSA (225 aa)) form the UCH catalytic domain. The tract at residues 8–13 (PLEANP) is interaction with ubiquitin. Cys-95 functions as the Nucleophile in the catalytic mechanism. Ser-130 is subject to Phosphoserine. The interval 152–159 (AHEGQTEA) is interaction with ubiquitin. Crossover loop which restricts access of large ubiquitin adducts to the active site. Catalysis depends on His-169, which acts as the Proton donor. Residues 219 to 224 (ELRFNA) form an interaction with ubiquitin region.

Belongs to the peptidase C12 family. In terms of assembly, preferentially binds diubiquitin; the interaction does not hydrolyze diubiquitin but, in vitro, inhibits the hydrolyzing activity on other substrates.

The protein resides in the cytoplasm. The enzyme catalyses Thiol-dependent hydrolysis of ester, thioester, amide, peptide and isopeptide bonds formed by the C-terminal Gly of ubiquitin (a 76-residue protein attached to proteins as an intracellular targeting signal).. Its activity is regulated as follows. Inhibited by monoubiquitin and diubiquitin. In terms of biological role, deubiquitinating enzyme (DUB) that controls levels of cellular ubiquitin through processing of ubiquitin precursors and ubiquitinated proteins. Thiol protease that recognizes and hydrolyzes a peptide bond at the C-terminal glycine of either ubiquitin or NEDD8. Has a 10-fold preference for Arg and Lys at position P3, and exhibits a preference towards 'Lys-48'-linked ubiquitin chains. Deubiquitinates ENAC in apical compartments, thereby regulating apical membrane recycling. Indirectly increases the phosphorylation of IGFIR, AKT and FOXO1 and promotes insulin-signaling and insulin-induced adipogenesis. Required for stress-response retinal, skeletal muscle and germ cell maintenance. May be involved in working memory. Can hydrolyze UBB(+1), a mutated form of ubiquitin which is not effectively degraded by the proteasome. The polypeptide is Ubiquitin carboxyl-terminal hydrolase isozyme L3 (UCHL3) (Sus scrofa (Pig)).